The chain runs to 283 residues: Pantothenate synthetase (283 aa).

Residue 30–37 participates in ATP binding; the sequence is MGALHEGH. Histidine 37 serves as the catalytic Proton donor. Glutamine 61 is a (R)-pantoate binding site. Glutamine 61 contributes to the beta-alanine binding site. ATP is bound at residue 147 to 150; sequence GEKD. Glutamine 153 lines the (R)-pantoate pocket. Residues valine 176 and 184 to 187 contribute to the ATP site; that span reads VSSR.

Belongs to the pantothenate synthetase family. Homodimer.

The protein localises to the cytoplasm. It carries out the reaction (R)-pantoate + beta-alanine + ATP = (R)-pantothenate + AMP + diphosphate + H(+). It functions in the pathway cofactor biosynthesis; (R)-pantothenate biosynthesis; (R)-pantothenate from (R)-pantoate and beta-alanine: step 1/1. Its function is as follows. Catalyzes the condensation of pantoate with beta-alanine in an ATP-dependent reaction via a pantoyl-adenylate intermediate. In Chlorobium luteolum (strain DSM 273 / BCRC 81028 / 2530) (Pelodictyon luteolum), this protein is Pantothenate synthetase.